Consider the following 330-residue polypeptide: BTB/POZ domain-containing adapter for CUL3-mediated RhoA degradation protein 1 (330 aa).

The interval 1–34 is disordered; sequence MSAEASGSSGGHAVTVSGSSPSSSSHVGEEKPGR. The region spanning 40-108 is the BTB domain; that stretch reads KYVKLNVGGT…LRDGTVPLPD (69 aa). Over residues 282–291 the composition is skewed to low complexity; the sequence is GGVSSSGAGQ. Residues 282–304 are disordered; sequence GGVSSSGAGQSEEEGAGAGGGDR.

This sequence belongs to the BACURD family.

It localises to the nucleus. Functionally, substrate-specific adapter of a BCR (BTB-CUL3-RBX1) E3 ubiquitin-protein ligase complex required for synaptic transmission. The BCR(KCTD13) E3 ubiquitin ligase complex mediates the ubiquitination of RHOA, leading to its degradation by the proteasome, thereby regulating the actin cytoskeleton and promoting synaptic transmission. The sequence is that of BTB/POZ domain-containing adapter for CUL3-mediated RhoA degradation protein 1 from Danio rerio (Zebrafish).